The chain runs to 205 residues: Guanylate kinase (205 aa).

Residues 7–185 (GNIFIISAAS…AEEDLRHIVN (179 aa)) form the Guanylate kinase-like domain. 14–21 (AASGTGKT) contributes to the ATP binding site.

It belongs to the guanylate kinase family.

It localises to the cytoplasm. The catalysed reaction is GMP + ATP = GDP + ADP. Functionally, essential for recycling GMP and indirectly, cGMP. This is Guanylate kinase (gmk) from Neisseria meningitidis serogroup A / serotype 4A (strain DSM 15465 / Z2491).